The following is a 315-amino-acid chain: G-box-binding factor 1 (315 aa).

Disordered stretches follow at residues 1–56 (MGTS…GSPS) and 93–268 (MPMP…RDEL). The segment covering 46-56 (PFFPSPVGSPS) has biased composition (pro residues). Composition is skewed to polar residues over residues 133–164 (GSGN…QEQG) and 178–187 (ASSQSTTGEI). The bZIP domain maps to 222–285 (ELKRQKRKQS…DKLKSENNSI (64 aa)). The basic motif stretch occupies residues 224–243 (KRQKRKQSNRESARRSRLRK). A compositionally biased stretch (polar residues) spans 249 to 262 (QLQQRVESLSNENQ). The leucine-zipper stretch occupies residues 250-285 (LQQRVESLSNENQSLRDELQRLSSECDKLKSENNSI).

It belongs to the bZIP family. In terms of assembly, monomer and heterodimers with BZIP16 and BZIP68. Interacts with GIP1. In terms of processing, phosphorylated by CK2. In terms of tissue distribution, found in both light and dark grown leaves.

It localises to the nucleus. Binds to the G-box motif (5'-CCACGTGG-3') of the rbcS-1A gene promoter. G-box and G-box-like motifs are cis-acting elements defined in promoters of certain plant genes which are regulated by such diverse stimuli as light-induction or hormone control. Binds to the G-box motif 5'-CACGTG-3' of LHCB2.4 (At3g27690) promoter. May act as transcriptional activator in light-regulated expression of LHCB2.4. Probably binds DNA as monomer. DNA-binding activity is redox-dependent. This chain is G-box-binding factor 1 (GBF1), found in Arabidopsis thaliana (Mouse-ear cress).